Here is a 130-residue protein sequence, read N- to C-terminus: Small ribosomal subunit protein uS9 (130 aa).

The disordered stretch occupies residues 101–130 (AGLLTRDARMKERKKPGLKKARKASQFSKR). The span at 111–130 (KERKKPGLKKARKASQFSKR) shows a compositional bias: basic residues.

The protein belongs to the universal ribosomal protein uS9 family.

This Levilactobacillus brevis (strain ATCC 367 / BCRC 12310 / CIP 105137 / JCM 1170 / LMG 11437 / NCIMB 947 / NCTC 947) (Lactobacillus brevis) protein is Small ribosomal subunit protein uS9.